We begin with the raw amino-acid sequence, 710 residues long: Phosphoribosylformylglycinamidine synthase subunit PurL (710 aa).

Residue histidine 36 is part of the active site. Residues tyrosine 39 and lysine 80 each contribute to the ATP site. Position 82 (glutamate 82) interacts with Mg(2+). Substrate-binding positions include 83–86 (SHNH) and arginine 105. The Proton acceptor role is filled by histidine 84. A Mg(2+)-binding site is contributed by aspartate 106. Glutamine 226 serves as a coordination point for substrate. Mg(2+) is bound at residue aspartate 252. A substrate-binding site is contributed by 294–296 (ETQ). 2 residues coordinate ATP: aspartate 470 and glycine 507. A substrate-binding site is contributed by serine 510.

This sequence belongs to the FGAMS family. Monomer. Part of the FGAM synthase complex composed of 1 PurL, 1 PurQ and 2 PurS subunits.

It is found in the cytoplasm. It catalyses the reaction N(2)-formyl-N(1)-(5-phospho-beta-D-ribosyl)glycinamide + L-glutamine + ATP + H2O = 2-formamido-N(1)-(5-O-phospho-beta-D-ribosyl)acetamidine + L-glutamate + ADP + phosphate + H(+). It participates in purine metabolism; IMP biosynthesis via de novo pathway; 5-amino-1-(5-phospho-D-ribosyl)imidazole from N(2)-formyl-N(1)-(5-phospho-D-ribosyl)glycinamide: step 1/2. Functionally, part of the phosphoribosylformylglycinamidine synthase complex involved in the purines biosynthetic pathway. Catalyzes the ATP-dependent conversion of formylglycinamide ribonucleotide (FGAR) and glutamine to yield formylglycinamidine ribonucleotide (FGAM) and glutamate. The FGAM synthase complex is composed of three subunits. PurQ produces an ammonia molecule by converting glutamine to glutamate. PurL transfers the ammonia molecule to FGAR to form FGAM in an ATP-dependent manner. PurS interacts with PurQ and PurL and is thought to assist in the transfer of the ammonia molecule from PurQ to PurL. This is Phosphoribosylformylglycinamidine synthase subunit PurL from Sulfolobus acidocaldarius (strain ATCC 33909 / DSM 639 / JCM 8929 / NBRC 15157 / NCIMB 11770).